We begin with the raw amino-acid sequence, 253 residues long: uncharacterized protein (253 aa).

C2HC LYAR-type zinc fingers lie at residues 1–26 (MVFFSCNNCGEACKKNQVERHLFQCR) and 27–51 (NTTFSCIDCQLVYTRETYKDHVKCI). Positions 6, 9, 21, 25, 32, 35, 47, and 50 each coordinate Zn(2+). Residues 136–171 (AAEADKMREEAIRKQEETQKMEKAQKEAAAAAKKET) adopt a coiled-coil conformation.

It localises to the nucleus. This is an uncharacterized protein from Caenorhabditis elegans.